We begin with the raw amino-acid sequence, 63 residues long: Cecropin-2 (63 aa).

The first 21 residues, 1 to 21, serve as a signal peptide directing secretion; that stretch reads MNFNKVLVLLAVIFAVFAGQT. A propeptide spanning residues 22-23 is cleaved from the precursor; that stretch reads EA. Lys62 is modified (lysine amide).

This sequence belongs to the cecropin family.

It localises to the secreted. Cecropins have lytic and antibacterial activity against several Gram-positive and Gram-negative bacteria. The sequence is that of Cecropin-2 (CEC2) from Ceratitis capitata (Mediterranean fruit fly).